The chain runs to 372 residues: MISVMAPGSEKTGKVETILKKRVLLAISGGVDSSVAALLLKEEGYEVAGVTMCLGVREEENKVRCCGREAIEDARGVCEILGIPHYVLDYAPLLETCVIDKFVREYRLGRTPNPCIDCNRYLKFGHLLDSARTMGFDYLATGHYAKIERKESRWILKKAKDLVKDQTYFLYPIPVAALEHILFPLADRTKDEVREIARQALLPIAEKPESQDLCFVTQDSYRDFLQEQGCPVHPGPIVDRSGRVLGEHSGTVFYTIGQRHGLGISSPFPLYVVAIDVAGNSVIVSGKEDVYAQGLVAGEMNWLTPERPQEAEARIRHRKRTCSCRIVPEGDRIRVYFAEDQDAVTPGQAVVLYQEDEVLGGGVIEEALHYAN.

ATP contacts are provided by residues 26-33 (AISGGVDS) and Met52. Catalysis depends on Cys118, which acts as the Nucleophile. A disulfide bond links Cys118 and Cys214. Gly142 lines the ATP pocket. The interaction with tRNA stretch occupies residues 164-166 (KDQ). Cys214 acts as the Cysteine persulfide intermediate in catalysis.

This sequence belongs to the MnmA/TRMU family.

It localises to the cytoplasm. The catalysed reaction is S-sulfanyl-L-cysteinyl-[protein] + uridine(34) in tRNA + AH2 + ATP = 2-thiouridine(34) in tRNA + L-cysteinyl-[protein] + A + AMP + diphosphate + H(+). Its function is as follows. Catalyzes the 2-thiolation of uridine at the wobble position (U34) of tRNA, leading to the formation of s(2)U34. This Syntrophus aciditrophicus (strain SB) protein is tRNA-specific 2-thiouridylase MnmA 1.